Here is a 356-residue protein sequence, read N- to C-terminus: MKGYLKLEDGSIFEGELISKNKKGYGEVVFTTGMTGYQEAITDPSYAGQIVVMTYPLIGNYGINKYDFQSEKPHIRGFVVREYCDKPSNFQSEESLLSYLDNHNIPVLSGIDTRALTKKLRENGTMRGIITYNPEDNIEFDQTNLLEEVSTKKPYRIAGIGPKLAFIDLGTKKGILKMLNSVGFDIYVFPYNASYDDVMQINPDAIFLSNGPGDPKDAVDAIELTKHFIGMKPVLGICLGHQIIALALGCNTVKMKFGHRGANQPVKDLLTNKDYITSQNHGYAVEEESIDKDKITVTHINLNDGTVEGIMHKFLPVFSVQYHPEACPGPRDSTDIFDKFMDIVMVYKRRFYFAEV.

Residues Met-1 to Ile-160 are CPSase. Positions 45, 211, and 213 each coordinate L-glutamine. Positions Lys-163–Arg-350 constitute a Glutamine amidotransferase type-1 domain. Residue Cys-238 is the Nucleophile of the active site. L-glutamine-binding residues include Leu-239, Gln-242, Asn-280, Gly-282, and Tyr-283. Residues His-323 and Glu-325 contribute to the active site.

It belongs to the CarA family. As to quaternary structure, composed of two chains; the small (or glutamine) chain promotes the hydrolysis of glutamine to ammonia, which is used by the large (or ammonia) chain to synthesize carbamoyl phosphate. Tetramer of heterodimers (alpha,beta)4.

It carries out the reaction hydrogencarbonate + L-glutamine + 2 ATP + H2O = carbamoyl phosphate + L-glutamate + 2 ADP + phosphate + 2 H(+). The enzyme catalyses L-glutamine + H2O = L-glutamate + NH4(+). The protein operates within amino-acid biosynthesis; L-arginine biosynthesis; carbamoyl phosphate from bicarbonate: step 1/1. It participates in pyrimidine metabolism; UMP biosynthesis via de novo pathway; (S)-dihydroorotate from bicarbonate: step 1/3. Small subunit of the glutamine-dependent carbamoyl phosphate synthetase (CPSase). CPSase catalyzes the formation of carbamoyl phosphate from the ammonia moiety of glutamine, carbonate, and phosphate donated by ATP, constituting the first step of 2 biosynthetic pathways, one leading to arginine and/or urea and the other to pyrimidine nucleotides. The small subunit (glutamine amidotransferase) binds and cleaves glutamine to supply the large subunit with the substrate ammonia. In Caldanaerobacter subterraneus subsp. tengcongensis (strain DSM 15242 / JCM 11007 / NBRC 100824 / MB4) (Thermoanaerobacter tengcongensis), this protein is Carbamoyl phosphate synthase small chain.